The following is a 214-amino-acid chain: Thymidylate kinase (214 aa).

An ATP-binding site is contributed by G7–T14.

It belongs to the thymidylate kinase family.

It catalyses the reaction dTMP + ATP = dTDP + ADP. Phosphorylation of dTMP to form dTDP in both de novo and salvage pathways of dTTP synthesis. This is Thymidylate kinase from Desulfosudis oleivorans (strain DSM 6200 / JCM 39069 / Hxd3) (Desulfococcus oleovorans).